Here is an 842-residue protein sequence, read N- to C-terminus: Elongation factor 2 (842 aa).

The tr-type G domain maps to 17 to 253; it reads TNVRNMSVIA…LWGDSYFNPK (237 aa). GTP-binding positions include 26 to 33, 158 to 161, and 213 to 215; these read AHVDHGKS, NKVD, and SGL. His-699 is modified (diphthamide).

This sequence belongs to the TRAFAC class translation factor GTPase superfamily. Classic translation factor GTPase family. EF-G/EF-2 subfamily.

Its subcellular location is the cytoplasm. It catalyses the reaction GTP + H2O = GDP + phosphate + H(+). Functionally, catalyzes the GTP-dependent ribosomal translocation step during translation elongation. During this step, the ribosome changes from the pre-translocational (PRE) to the post-translocational (POST) state as the newly formed A-site-bound peptidyl-tRNA and P-site-bound deacylated tRNA move to the P and E sites, respectively. Catalyzes the coordinated movement of the two tRNA molecules, the mRNA and conformational changes in the ribosome. This Komagataella pastoris (Yeast) protein is Elongation factor 2 (EFT1).